Consider the following 564-residue polypeptide: CTP synthase (564 aa).

Residues 1 to 265 form an amidoligase domain region; sequence MTKFVFVTGG…DEIVCHRLDI (265 aa). Residue Ser13 coordinates CTP. A UTP-binding site is contributed by Ser13. Residues 14–19 and Asp71 each bind ATP; that span reads SLGKGI. The Mg(2+) site is built by Asp71 and Glu139. Residues 146-148, 186-191, and Lys222 each bind CTP; these read DIE and KTKPTQ. UTP is bound by residues 186–191 and Lys222; that span reads KTKPTQ. One can recognise a Glutamine amidotransferase type-1 domain in the interval 290–543; sequence SIALVGKYVD…IQAAISFAGQ (254 aa). Residue Gly351 participates in L-glutamine binding. Cys378 serves as the catalytic Nucleophile; for glutamine hydrolysis. L-glutamine is bound by residues 379–382, Glu402, and Arg469; that span reads LGMQ. Active-site residues include His516 and Glu518.

Belongs to the CTP synthase family. In terms of assembly, homotetramer.

It catalyses the reaction UTP + L-glutamine + ATP + H2O = CTP + L-glutamate + ADP + phosphate + 2 H(+). The enzyme catalyses L-glutamine + H2O = L-glutamate + NH4(+). The catalysed reaction is UTP + NH4(+) + ATP = CTP + ADP + phosphate + 2 H(+). It functions in the pathway pyrimidine metabolism; CTP biosynthesis via de novo pathway; CTP from UDP: step 2/2. Its activity is regulated as follows. Allosterically activated by GTP, when glutamine is the substrate; GTP has no effect on the reaction when ammonia is the substrate. The allosteric effector GTP functions by stabilizing the protein conformation that binds the tetrahedral intermediate(s) formed during glutamine hydrolysis. Inhibited by the product CTP, via allosteric rather than competitive inhibition. In terms of biological role, catalyzes the ATP-dependent amination of UTP to CTP with either L-glutamine or ammonia as the source of nitrogen. Regulates intracellular CTP levels through interactions with the four ribonucleotide triphosphates. This chain is CTP synthase, found in Nitrosomonas europaea (strain ATCC 19718 / CIP 103999 / KCTC 2705 / NBRC 14298).